A 440-amino-acid chain; its full sequence is Protein eva-1 homolog C (440 aa).

Positions 1 to 13 (MLLPGHPRPPPAP) are enriched in pro residues. Residues 1 to 23 (MLLPGHPRPPPAPQSAQNQGLRR) are disordered. An N-terminal signal peptide occupies residues 1 to 48 (MLLPGHPRPPPAPQSAQNQGLRRQVEPPGQLLRLFYCTVLVCSKETSA). Over 49–321 (LTDFSGYLTK…AYIRAHPERA (273 aa)) the chain is Extracellular. 3 N-linked (GlcNAc...) asparagine glycosylation sites follow: Asn-62, Asn-109, and Asn-165. The 93-residue stretch at 67–159 (ACDGDYLNLQ…KYLLVSFKCQ (93 aa)) folds into the SUEL-type lectin 1 domain. The SUEL-type lectin 2 domain occupies 168 to 260 (VCENQELKLH…KYLTVAYACV (93 aa)). The chain crosses the membrane as a helical span at residues 322–342 (ALLFMSSVCIGLLLTLCALVI). Topologically, residues 343–440 (RVSCTKDFRE…SLPRNVGHFY (98 aa)) are cytoplasmic. Residues 364-384 (SDKAEEDSEEDLEEEDSSDSQ) form a disordered region. Positions 367 to 381 (AEEDSEEDLEEEDSS) are enriched in acidic residues.

Belongs to the EVA1 family. Ubiquitous.

The protein resides in the cell membrane. Functionally, binds heparin. The chain is Protein eva-1 homolog C (Eva1c) from Mus musculus (Mouse).